We begin with the raw amino-acid sequence, 449 residues long: Exodeoxyribonuclease 7 large subunit (449 aa).

It belongs to the XseA family. As to quaternary structure, heterooligomer composed of large and small subunits.

Its subcellular location is the cytoplasm. The catalysed reaction is Exonucleolytic cleavage in either 5'- to 3'- or 3'- to 5'-direction to yield nucleoside 5'-phosphates.. Functionally, bidirectionally degrades single-stranded DNA into large acid-insoluble oligonucleotides, which are then degraded further into small acid-soluble oligonucleotides. The sequence is that of Exodeoxyribonuclease 7 large subunit from Lacticaseibacillus paracasei (strain ATCC 334 / BCRC 17002 / CCUG 31169 / CIP 107868 / KCTC 3260 / NRRL B-441) (Lactobacillus paracasei).